Consider the following 514-residue polypeptide: Transmembrane protein 151B (514 aa).

Positions 1–40 (MSAEGEPAEAVAETPANSPGEEAAAAAATTDVDVREEQRP) are disordered. Helical transmembrane passes span 57–77 (CLLL…CQVT), 104–124 (YVYI…VECW), and 286–306 (PWYV…SWPL).

The protein belongs to the TMEM151 family.

Its subcellular location is the membrane. In Xenopus tropicalis (Western clawed frog), this protein is Transmembrane protein 151B (tmem151b).